The chain runs to 191 residues: Protein YceI (191 aa).

Positions 1 to 22 (MKKNLLGFTLASLLFTTGSAVA) are cleaved as a signal peptide.

This sequence belongs to the UPF0312 family. Type 1 subfamily.

The protein localises to the periplasm. This chain is Protein YceI, found in Salmonella dublin (strain CT_02021853).